The chain runs to 246 residues: Sec-independent protein translocase protein TatB (246 aa).

A helical membrane pass occupies residues 1–21 (MFDIGWSELLVIAVVLIVVVG). Disordered regions lie at residues 94–122 (SDLQKATSPSDGLSSTAAPATSEPVAPLV), 179–204 (SRSKAVATPETTVATNASEPASPKPT), and 225–246 (VADAKPAKAARTKAAKPKKDEA). Polar residues-rich tracts occupy residues 97–112 (QKATSPSDGLSSTAAP) and 187–197 (PETTVATNASE).

It belongs to the TatB family. As to quaternary structure, the Tat system comprises two distinct complexes: a TatABC complex, containing multiple copies of TatA, TatB and TatC subunits, and a separate TatA complex, containing only TatA subunits. Substrates initially bind to the TatABC complex, which probably triggers association of the separate TatA complex to form the active translocon.

The protein localises to the cell inner membrane. Part of the twin-arginine translocation (Tat) system that transports large folded proteins containing a characteristic twin-arginine motif in their signal peptide across membranes. Together with TatC, TatB is part of a receptor directly interacting with Tat signal peptides. TatB may form an oligomeric binding site that transiently accommodates folded Tat precursor proteins before their translocation. The polypeptide is Sec-independent protein translocase protein TatB (Agrobacterium fabrum (strain C58 / ATCC 33970) (Agrobacterium tumefaciens (strain C58))).